Reading from the N-terminus, the 309-residue chain is Low density lipoprotein receptor adapter protein 1-B (309 aa).

The region spanning 41–195 (LLEGMLFHLK…SDGEGASSSQ (155 aa)) is the PID domain. Positions 179 to 201 (DKREKSGSDGEGASSSQSDGSSS) are disordered. Residues 189–201 (EGASSSQSDGSSS) show a composition bias toward low complexity. The short motif at 213–217 (LLDFE) is the Clathrin box element. The interval 250-277 (WELDDGLDEAFARLAESRTNPQVLDIGL) is AP-2 complex binding. Positions 258–267 (EAFARLAESR) match the [DE]-X(1,2)-F-X-X-[FL]-X-X-X-R motif motif.

Interacts (via PID domain) with ldlr (via NPXY motif). Binds to soluble clathrin trimers and to the adapter protein complex 2 (AP-2, beta 2 subunit). Binds to phosphoinositides, which regulate clathrin bud assembly at the cell surface. Interacts with the VLDL receptor (vldlr). Interacts with the vitellogenin receptor. As to expression, expressed at high level during oogenesis and embryogenesis. Found at low level in the adult liver and spleen. Found at very low level in testis and heart. Not found in the oocyte vegetal cortex.

It localises to the cytoplasm. Adapter protein (clathrin-associated sorting protein (CLASP)) required for efficient endocytosis of the LDL receptor (LDLR). Also involved in the vitellogenin receptor mediated endocytosis of nutrients during oogenesis. This is Low density lipoprotein receptor adapter protein 1-B from Xenopus laevis (African clawed frog).